The chain runs to 245 residues: LOB domain-containing protein 16 (245 aa).

Positions Ser-14–Ile-116 constitute an LOB domain. Positions Tyr-162–Ser-183 are disordered.

Belongs to the LOB domain-containing protein family. Homodimer and heterodimer with LBD18. Expressed in roots and faintly in shoots.

It is found in the nucleus. Transcriptional activator. Involved in lateral root formation. Regulated by the transcriptional activators ARF7 and ARF19. Functions in the initiation and emergence of lateral roots, in conjunction with LBD18, downstream of ARF7 and ARF19. Acts downstream of the auxin influx carriers AUX1 and LAX1 in the regulation of lateral root initiation and development. The chain is LOB domain-containing protein 16 (LBD16) from Arabidopsis thaliana (Mouse-ear cress).